The chain runs to 308 residues: Aspartate carbamoyltransferase catalytic subunit (308 aa).

The carbamoyl phosphate site is built by R57 and T58. Residue K86 participates in L-aspartate binding. Carbamoyl phosphate contacts are provided by R107, H135, and Q138. Residues R167 and R228 each contribute to the L-aspartate site. Carbamoyl phosphate-binding residues include L267 and P268.

It belongs to the aspartate/ornithine carbamoyltransferase superfamily. ATCase family. Heterooligomer of catalytic and regulatory chains.

It catalyses the reaction carbamoyl phosphate + L-aspartate = N-carbamoyl-L-aspartate + phosphate + H(+). It participates in pyrimidine metabolism; UMP biosynthesis via de novo pathway; (S)-dihydroorotate from bicarbonate: step 2/3. Functionally, catalyzes the condensation of carbamoyl phosphate and aspartate to form carbamoyl aspartate and inorganic phosphate, the committed step in the de novo pyrimidine nucleotide biosynthesis pathway. This is Aspartate carbamoyltransferase catalytic subunit from Methanosarcina acetivorans (strain ATCC 35395 / DSM 2834 / JCM 12185 / C2A).